We begin with the raw amino-acid sequence, 536 residues long: Phosphoenolpyruvate carboxykinase (ATP) (536 aa).

3 residues coordinate substrate: R62, Y203, and K209. Residues K209, H228, and 244 to 252 each bind ATP; that span reads GLSGTGKTT. Mn(2+) contacts are provided by K209 and H228. D265 is a binding site for Mn(2+). ATP-binding positions include E293, R329, 445-446, and T451; that span reads RI. R329 contacts substrate.

It belongs to the phosphoenolpyruvate carboxykinase (ATP) family. In terms of assembly, monomer. Requires Mn(2+) as cofactor.

The protein resides in the cytoplasm. The enzyme catalyses oxaloacetate + ATP = phosphoenolpyruvate + ADP + CO2. It participates in carbohydrate biosynthesis; gluconeogenesis. In terms of biological role, involved in the gluconeogenesis. Catalyzes the conversion of oxaloacetate (OAA) to phosphoenolpyruvate (PEP) through direct phosphoryl transfer between the nucleoside triphosphate and OAA. The protein is Phosphoenolpyruvate carboxykinase (ATP) of Actinobacillus pleuropneumoniae serotype 5b (strain L20).